Here is a 277-residue protein sequence, read N- to C-terminus: Thiazole synthase (277 aa).

Residue Lys107 is the Schiff-base intermediate with DXP of the active site. 1-deoxy-D-xylulose 5-phosphate contacts are provided by residues Gly168, Ala194 to Gly195, and Ala216 to Ser217.

Belongs to the ThiG family. Homotetramer. Forms heterodimers with either ThiH or ThiS.

Its subcellular location is the cytoplasm. The enzyme catalyses [ThiS sulfur-carrier protein]-C-terminal-Gly-aminoethanethioate + 2-iminoacetate + 1-deoxy-D-xylulose 5-phosphate = [ThiS sulfur-carrier protein]-C-terminal Gly-Gly + 2-[(2R,5Z)-2-carboxy-4-methylthiazol-5(2H)-ylidene]ethyl phosphate + 2 H2O + H(+). The protein operates within cofactor biosynthesis; thiamine diphosphate biosynthesis. In terms of biological role, catalyzes the rearrangement of 1-deoxy-D-xylulose 5-phosphate (DXP) to produce the thiazole phosphate moiety of thiamine. Sulfur is provided by the thiocarboxylate moiety of the carrier protein ThiS. In vitro, sulfur can be provided by H(2)S. This chain is Thiazole synthase, found in Cutibacterium acnes (strain DSM 16379 / KPA171202) (Propionibacterium acnes).